A 150-amino-acid polypeptide reads, in one-letter code: DNA-directed RNA polymerases I, II, and III subunit RPABC3 (150 aa).

Residue Ala2 is modified to N-acetylalanine.

It belongs to the eukaryotic RPB8 RNA polymerase subunit family. As to quaternary structure, component of the RNA polymerase I (Pol I), RNA polymerase II (Pol II) and RNA polymerase III (Pol III) complexes consisting of at least 13, 12 and 17 subunits, respectively. Pol I complex consists of a ten-subunit catalytic core composed of POLR1A/RPA1, POLR1B/RPA2, POLR1C/RPAC1, POLR1D/RPAC2, POLR1H/RPA12, POLR2E/RPABC1, POLR2F/RPABC2, POLR2H/RPABC3, POLR2K/RPABC4 and POLR2L/RPABC5; a mobile stalk subunit POLR1F/RPA43 protruding from the core and additional subunits homologous to general transcription factors POLR1E/RPA49 and POLR1G/RPA34. Part of Pol I pre-initiation complex (PIC), in which Pol I core assembles with RRN3 and promoter-bound UTBF and SL1/TIF-IB complex. Pol II complex contains a ten-subunit catalytic core composed of POLR2A/RPB1, POLR2B/RPB2, POLR2C/RPB3, POLR2I/RPB9, POLR2J/RPB11, POLR2E/RPABC1, POLR2F/RPABC2, POLR2H/RPABC3, POLR2K/RPABC4 and POLR2L/RPABC5 and a mobile stalk composed of two subunits POLR2D/RPB4 and POLR2G/RPB7. Part of Pol II(G) complex, in which Pol II core associates with an additional subunit POLR2M; unlike conventional Pol II, Pol II(G) functions as a transcriptional repressor. Part of Pol II pre-initiation complex (PIC), in which Pol II core assembles with Mediator, general transcription factors and other specific initiation factors including GTF2E1, GTF2E2, GTF2F1, GTF2F2, TCEA1, ERCC2, ERCC3, GTF2H2, GTF2H3, GTF2H4, GTF2H5, GTF2A1, GTF2A2, GTF2B and TBP; this large multi-subunit PIC complex mediates DNA unwinding and targets Pol II core to the transcription start site where the first phosphodiester bond forms. Directly interacts with POLR2A. Pol III complex consists of a ten-subunit catalytic core composed of POLR3A/RPC1, POLR3B/RPC2, POLR1C/RPAC1, POLR1D/RPAC2, POLR3K/RPC10, POLR2E/RPABC1, POLR2F/RPABC2, POLR2H/RPABC3, POLR2K/RPABC4 and POLR2L/RPABC5; a mobile stalk composed of two subunits POLR3H/RPC8 and CRCP/RPC9, protruding from the core and functioning primarily in transcription initiation; and additional subunits homologous to general transcription factors of the RNA polymerase II machinery, POLR3C/RPC3-POLR3F/RPC6-POLR3G/RPC7 heterotrimer required for transcription initiation and POLR3D/RPC4-POLR3E/RPC5 heterodimer involved in both transcription initiation and termination.

The protein resides in the nucleus. It localises to the nucleolus. Functionally, DNA-dependent RNA polymerase catalyzes the transcription of DNA into RNA using the four ribonucleoside triphosphates as substrates. Common component of RNA polymerases I, II and III which synthesize ribosomal RNA precursors, mRNA precursors and many functional non-coding RNAs, and small RNAs, such as 5S rRNA and tRNAs, respectively. The sequence is that of DNA-directed RNA polymerases I, II, and III subunit RPABC3 (POLR2H) from Bos taurus (Bovine).